Reading from the N-terminus, the 268-residue chain is Orotidine 5'-phosphate decarboxylase (268 aa).

Residues aspartate 37, 59–61 (KTH), 91–100 (DRKFADIGNT), tyrosine 217, and arginine 235 each bind substrate. Residue lysine 93 is the Proton donor of the active site.

The protein belongs to the OMP decarboxylase family.

The enzyme catalyses orotidine 5'-phosphate + H(+) = UMP + CO2. Its pathway is pyrimidine metabolism; UMP biosynthesis via de novo pathway; UMP from orotate: step 2/2. The polypeptide is Orotidine 5'-phosphate decarboxylase (URA4) (Maudiozyma exigua (Yeast)).